Here is a 179-residue protein sequence, read N- to C-terminus: Large ribosomal subunit protein uL6 (179 aa).

The protein belongs to the universal ribosomal protein uL6 family. In terms of assembly, part of the 50S ribosomal subunit.

Functionally, this protein binds to the 23S rRNA, and is important in its secondary structure. It is located near the subunit interface in the base of the L7/L12 stalk, and near the tRNA binding site of the peptidyltransferase center. This Clostridium perfringens (strain ATCC 13124 / DSM 756 / JCM 1290 / NCIMB 6125 / NCTC 8237 / Type A) protein is Large ribosomal subunit protein uL6.